The sequence spans 292 residues: Tubulin beta chain (292 aa).

GTP-binding residues include N49 and N71. Residues 265-292 are disordered; it reads SEYQQYQDATAEEEGEFDEEEEGDEEAA. The segment covering 274–292 has biased composition (acidic residues); sequence TAEEEGEFDEEEEGDEEAA.

This sequence belongs to the tubulin family. As to quaternary structure, dimer of alpha and beta chains. A typical microtubule is a hollow water-filled tube with an outer diameter of 25 nm and an inner diameter of 15 nM. Alpha-beta heterodimers associate head-to-tail to form protofilaments running lengthwise along the microtubule wall with the beta-tubulin subunit facing the microtubule plus end conferring a structural polarity. Microtubules usually have 13 protofilaments but different protofilament numbers can be found in some organisms and specialized cells. Mg(2+) serves as cofactor.

The protein resides in the cytoplasm. Its subcellular location is the cytoskeleton. In terms of biological role, tubulin is the major constituent of microtubules, a cylinder consisting of laterally associated linear protofilaments composed of alpha- and beta-tubulin heterodimers. Microtubules grow by the addition of GTP-tubulin dimers to the microtubule end, where a stabilizing cap forms. Below the cap, tubulin dimers are in GDP-bound state, owing to GTPase activity of alpha-tubulin. The polypeptide is Tubulin beta chain (Strongylocentrotus purpuratus (Purple sea urchin)).